The primary structure comprises 736 residues: Phosphoribosylformylglycinamidine synthase subunit PurL (736 aa).

H49 is an active-site residue. Y52 and K91 together coordinate ATP. E93 contacts Mg(2+). Substrate contacts are provided by residues 94–97 and R116; that span reads SHNH. H95 (proton acceptor) is an active-site residue. Residue D117 coordinates Mg(2+). Residue Q240 coordinates substrate. Residue D268 coordinates Mg(2+). A substrate-binding site is contributed by 312-314; it reads ESQ. ATP-binding residues include D493 and G530. N531 provides a ligand contact to Mg(2+). Position 533 (S533) interacts with substrate.

This sequence belongs to the FGAMS family. In terms of assembly, monomer. Part of the FGAM synthase complex composed of 1 PurL, 1 PurQ and 2 PurS subunits.

Its subcellular location is the cytoplasm. The enzyme catalyses N(2)-formyl-N(1)-(5-phospho-beta-D-ribosyl)glycinamide + L-glutamine + ATP + H2O = 2-formamido-N(1)-(5-O-phospho-beta-D-ribosyl)acetamidine + L-glutamate + ADP + phosphate + H(+). It functions in the pathway purine metabolism; IMP biosynthesis via de novo pathway; 5-amino-1-(5-phospho-D-ribosyl)imidazole from N(2)-formyl-N(1)-(5-phospho-D-ribosyl)glycinamide: step 1/2. In terms of biological role, part of the phosphoribosylformylglycinamidine synthase complex involved in the purines biosynthetic pathway. Catalyzes the ATP-dependent conversion of formylglycinamide ribonucleotide (FGAR) and glutamine to yield formylglycinamidine ribonucleotide (FGAM) and glutamate. The FGAM synthase complex is composed of three subunits. PurQ produces an ammonia molecule by converting glutamine to glutamate. PurL transfers the ammonia molecule to FGAR to form FGAM in an ATP-dependent manner. PurS interacts with PurQ and PurL and is thought to assist in the transfer of the ammonia molecule from PurQ to PurL. The protein is Phosphoribosylformylglycinamidine synthase subunit PurL of Rhodopseudomonas palustris (strain TIE-1).